Here is a 199-residue protein sequence, read N- to C-terminus: Prolactin-1 (199 aa).

Intrachain disulfides connect Cys-4–Cys-11, Cys-58–Cys-174, and Cys-191–Cys-199. N-linked (GlcNAc...) asparagine glycosylation is present at Asn-60.

The protein belongs to the somatotropin/prolactin family. Post-translationally, glycosylated.

It is found in the secreted. In Alligator mississippiensis (American alligator), this protein is Prolactin-1.